The following is a 689-amino-acid chain: Protein-glutamine gamma-glutamyltransferase 2 (689 aa).

Catalysis depends on residues Cys278, His336, and Asp359. Residues Asn399, Asp401, Glu437, Glu447, and Glu452 each coordinate Ca(2+). Residues 427 to 453 form a disordered region; that stretch reads STKSVGRDSREDITHTYKYPEGSEKER. Residues 431–441 show a composition bias toward basic and acidic residues; the sequence is VGRDSREDITH. 476–483 is a GTP binding site; sequence RIKLSEGA. Glu539 lines the Ca(2+) pocket. A GTP-binding site is contributed by 580–583; that stretch reads RDVY.

It belongs to the transglutaminase superfamily. Transglutaminase family. As to quaternary structure, monomer. It depends on Ca(2+) as a cofactor. As to expression, predominates in mature erythrocytes. Also found in kidney and cardiac muscle.

The protein localises to the cytoplasm. The protein resides in the cytosol. Its subcellular location is the nucleus. It localises to the chromosome. It is found in the secreted. The protein localises to the extracellular space. The protein resides in the extracellular matrix. Its subcellular location is the cell membrane. It localises to the mitochondrion. The catalysed reaction is L-glutaminyl-[protein] + L-lysyl-[protein] = [protein]-L-lysyl-N(6)-5-L-glutamyl-[protein] + NH4(+). It carries out the reaction L-glutaminyl-[protein] + serotonin = 5-serotonyl-L-glutamyl-[protein] + NH4(+). It catalyses the reaction L-glutaminyl-[protein] + dopamine = 5-dopaminyl-L-glutamyl-[protein] + NH4(+). The enzyme catalyses L-glutaminyl-[protein] + histamine = 5-histaminyl-L-glutamyl-[protein] + NH4(+). The catalysed reaction is L-glutaminyl-[protein] + (R)-noradrenaline = 5-(R)-noradrenalinyl-L-glutamyl-[protein] + NH4(+). It carries out the reaction L-glutaminyl-[protein] + H2O = L-glutamyl-[protein] + NH4(+). With respect to regulation, acyltransferase activity is regulated by the binding of GTP and Ca(2+): inactivated by GTP, which stabilizes its closed structure, thereby obstructing the accessibility of substrates to the active sites. In contrast, Ca(2+) acts as a cofactor by inducing conformational change to the active open form. In absence of Ca(2+), Mg(2+) may bind Ca(2+)-binding sites, promoting GTP-binding and subsequent inhibition of the acyltransferase activity. In terms of biological role, calcium-dependent acyltransferase that catalyzes the formation of covalent bonds between peptide-bound glutamine and various primary amines, such as gamma-amino group of peptide-bound lysine, or mono- and polyamines, thereby producing cross-linked or aminated proteins, respectively. Involved in many biological processes, such as bone development, angiogenesis, wound healing, cellular differentiation, chromatin modification and apoptosis. Acts as a protein-glutamine gamma-glutamyltransferase by mediating the cross-linking of proteins: under physiological conditions, the protein cross-linking activity is inhibited by GTP; inhibition is relieved by Ca(2+) in response to various stresses. When secreted, catalyzes cross-linking of proteins of the extracellular matrix, resulting in the formation of scaffolds. Plays a key role during apoptosis, both by (1) promoting the cross-linking of cytoskeletal proteins resulting in condensation of the cytoplasm, and by (2) mediating cross-linking proteins of the extracellular matrix, resulting in the irreversible formation of scaffolds that stabilize the integrity of the dying cells before their clearance by phagocytosis, thereby preventing the leakage of harmful intracellular components. In addition to protein cross-linking, can use different monoamine substrates to catalyze a vast array of protein post-translational modifications: mediates aminylation of serotonin, dopamine, noradrenaline or histamine into glutamine residues of target proteins to generate protein serotonylation, dopaminylation, noradrenalinylation or histaminylation, respectively. Mediates protein serotonylation of small GTPases during activation and aggregation of platelets, leading to constitutive activation of these GTPases. Plays a key role in chromatin organization by mediating serotonylation and dopaminylation of histone H3. Catalyzes serotonylation of 'Gln-5' of histone H3 (H3Q5ser) during serotonergic neuron differentiation, thereby facilitating transcription. Acts as a mediator of neurotransmission-independent role of nuclear dopamine in ventral tegmental area (VTA) neurons: catalyzes dopaminylation of 'Gln-5' of histone H3 (H3Q5dop), thereby regulating relapse-related transcriptional plasticity in the reward system. Also acts as a protein deamidase by mediating the side chain deamidation of specific glutamine residues of proteins to glutamate. May also act as an isopeptidase cleaving the previously formed cross-links. Also able to participate in signaling pathways independently of its acyltransferase activity: acts as a signal transducer in alpha-1 adrenergic receptor-mediated stimulation of phospholipase C-delta (PLCD) activity and is required for coupling alpha-1 adrenergic agonists to the stimulation of phosphoinositide lipid metabolism. This is Protein-glutamine gamma-glutamyltransferase 2 from Gallus gallus (Chicken).